A 1729-amino-acid chain; its full sequence is Zinc finger CCCH domain-containing protein 13 (1729 aa).

2 disordered regions span residues 1-40 and 57-156; these read MSKI…TTET and CRFI…NGDI. Polar residues predominate over residues 10–23; it reads VENTKTISESTSRR. A C3H1-type zinc finger spans residues 36 to 64; sequence STTETQCRNWLKTGSCLYGNTCRFIHGPS. Phosphoserine occurs at positions 64 and 77. Residues 76–136 are compositionally biased toward basic and acidic residues; that stretch reads RSPERPTGDL…IKIVKERTPE (61 aa). Positions 162 to 196 form a coiled coil; that stretch reads HELSLEMKRQKIQRELMKLEQENMDKREEIIIQKE. A Glycyl lysine isopeptide (Lys-Gly) (interchain with G-Cter in SUMO2) cross-link involves residue Lys179. Positions 182–193 are enriched in basic and acidic residues; it reads QENMDKREEIII. Disordered stretches follow at residues 182 to 528 and 581 to 1527; these read QENM…IRDV and DVYQ…PISD. 4 positions are modified to phosphoserine: Ser198, Ser207, Ser209, and Ser211. The span at 204–213 shows a compositional bias: low complexity; the sequence is SKLSPSPSLR. The span at 214 to 224 shows a compositional bias: basic residues; that stretch reads KSSKSPKRKSS. The residue at position 242 (Ser242) is a Phosphoserine. Polar residues predominate over residues 245–254; that stretch reads LDQQRNSKGN. Residue Thr263 is modified to Phosphothreonine. Phosphoserine is present on Ser265. Residues 283-315 are compositionally biased toward basic and acidic residues; that stretch reads KYKVKDRIEEKPRDGKDRGRDFEKQREKRDKPR. A phosphoserine mark is found at Ser316, Ser318, Ser324, and Ser327. Residues 321–345 show a composition bias toward low complexity; sequence QHHSPLSSRHHSSSSQSGSSIQRHS. Phosphothreonine is present on residues Thr353 and Thr363. A compositionally biased stretch (polar residues) spans 358–368; the sequence is YQRTLTPSLRR. Phosphoserine occurs at positions 369, 371, and 380. 2 stretches are compositionally biased toward basic and acidic residues: residues 393 to 528 and 581 to 636; these read PMRE…IRDV and DVYQ…EKGS. Residues 639–654 show a composition bias toward polar residues; that stretch reads TRGSQMDSHSSGSNYH. Basic and acidic residues predominate over residues 655–701; that stretch reads DSWETRSSYPERDRYPERDTRDPARDSSFERRHGERDRRDNRERDQR. Ser704 carries the phosphoserine modification. Residues 706 to 865 adopt a coiled-coil conformation; sequence IRHQGRSEEL…KERERQREWE (160 aa). Over residues 710 to 897 the composition is skewed to basic and acidic residues; it reads GRSEELERDE…IPRDSHEERK (188 aa). A phosphoserine mark is found at Ser907, Ser909, Ser913, Ser921, Ser924, Ser929, Ser949, Ser951, and Ser953. Residues 920–938 show a composition bias toward basic and acidic residues; sequence HSPDSDTYHSGDDKNEKHR. A compositionally biased stretch (basic and acidic residues) spans 957–1035; sequence LTEDRQGRWK…GSDRAHDEKK (79 aa). At Thr958 the chain carries Phosphothreonine. Basic residues predominate over residues 1036–1046; that stretch reads KAKAPKKPVKK. The span at 1047–1065 shows a compositional bias: basic and acidic residues; the sequence is KKEEDVGVERGNLETHEDS. Residues Ser1069, Ser1086, Ser1090, and Ser1093 each carry the phosphoserine modification. Over residues 1072–1086 the composition is skewed to basic residues; that stretch reads KGQKKKNIEKKRKRS. A Phosphothreonine modification is found at Thr1109. Basic and acidic residues-rich tracts occupy residues 1114 to 1137 and 1149 to 1159; these read IKEE…KKEN and PDRTEGLEAEH. Low complexity-rich tracts occupy residues 1160–1176 and 1184–1218; these read TAAT…LSSL and AAAS…TNGS. Residues 1228–1253 are compositionally biased toward basic and acidic residues; it reads ARGEKVEVSHVTLEDTPHRKLVDQKR. A phosphoserine mark is found at Ser1256, Ser1259, Ser1273, and Ser1275. The span at 1278-1288 shows a compositional bias: basic and acidic residues; it reads SAHRSGDDQGS. Ser1295 bears the Phosphoserine mark. Basic and acidic residues-rich tracts occupy residues 1296–1351 and 1359–1440; these read GSRD…DRQV and DSRD…ERTF. Residues Ser1427, Ser1443, Ser1447, Ser1467, Ser1470, Ser1499, and Ser1526 each carry the phosphoserine modification. 2 stretches are compositionally biased toward basic and acidic residues: residues 1447 to 1482 and 1490 to 1499; these read SGKR…DRDL and DVSKAERTES.

Belongs to the ZC3H13 family. Component of the WMM complex, a N6-methyltransferase complex composed of a catalytic subcomplex, named MAC, and of an associated subcomplex, named MACOM. The MAC subcomplex is composed of METTL3 and METTL14. The MACOM subcomplex is composed of WTAP, ZC3H13, CBLL1/HAKAI, VIRMA, and, in some cases of RBM15 (RBM15 or RBM15B). Also a component of a MACOM-like complex, named WTAP complex, composed of WTAP, ZC3H13, CBLL1/HAKAI, VIRMA, RBM15, BCLAF1 and THRAP3.

It is found in the nucleus speckle. The protein localises to the nucleus. Its subcellular location is the nucleoplasm. Its function is as follows. Associated component of the WMM complex, a complex that mediates N6-methyladenosine (m6A) methylation of RNAs, a modification that plays a role in the efficiency of mRNA splicing and RNA processing. Acts as a key regulator of m6A methylation by promoting m6A methylation of mRNAs at the 3'-UTR. Controls embryonic stem cells (ESCs) pluripotency via its role in m6A methylation. In the WMM complex, anchors component of the MACOM subcomplex in the nucleus. Also required for bridging WTAP to the RNA-binding component RBM15 (RBM15 or RBM15B). The chain is Zinc finger CCCH domain-containing protein 13 from Mus musculus (Mouse).